The chain runs to 287 residues: Pyridoxal kinase PdxY (287 aa).

Residues Ser10 and 45 to 46 contribute to the substrate site; that span reads TQ. ATP is bound by residues Asp112, Ala144, Glu149, Lys182, and 209–212; that span reads RPLV. Asp224 is a substrate binding site.

It belongs to the pyridoxine kinase family. PdxY subfamily. As to quaternary structure, homodimer. The cofactor is Mg(2+).

It catalyses the reaction pyridoxal + ATP = pyridoxal 5'-phosphate + ADP + H(+). Its pathway is cofactor metabolism; pyridoxal 5'-phosphate salvage; pyridoxal 5'-phosphate from pyridoxal: step 1/1. Pyridoxal kinase involved in the salvage pathway of pyridoxal 5'-phosphate (PLP). Catalyzes the phosphorylation of pyridoxal to PLP. This chain is Pyridoxal kinase PdxY, found in Escherichia coli O6:H1 (strain CFT073 / ATCC 700928 / UPEC).